A 104-amino-acid chain; its full sequence is Small ribosomal subunit protein bS18c (104 aa).

The protein belongs to the bacterial ribosomal protein bS18 family. In terms of assembly, part of the 30S ribosomal subunit.

It localises to the plastid. The protein resides in the chloroplast. This chain is Small ribosomal subunit protein bS18c, found in Lotus japonicus (Lotus corniculatus var. japonicus).